The primary structure comprises 348 residues: Probable malate dehydrogenase 2, mitochondrial (348 aa).

Residues 1 to 9 (MNKILTRSF) constitute a mitochondrion transit peptide. An NAD(+)-binding site is contributed by 31-37 (GASGQIG). Residues R112 and R118 each coordinate substrate. NAD(+) is bound by residues N125, Q132, and 150–152 (VGN). Substrate contacts are provided by N152 and R183. H208 serves as the catalytic Proton acceptor.

It belongs to the LDH/MDH superfamily. MDH type 2 family. Homodimer.

It is found in the mitochondrion. It catalyses the reaction (S)-malate + NAD(+) = oxaloacetate + NADH + H(+). In terms of biological role, catalyzes the reversible oxidation of malate to oxaloacetate. The protein is Probable malate dehydrogenase 2, mitochondrial (mdhB) of Dictyostelium discoideum (Social amoeba).